The chain runs to 234 residues: Enolase-phosphatase E1 (234 aa).

The Mg(2+) site is built by Asp-10 and Glu-12. Substrate contacts are provided by residues 125 to 126 (SS) and Lys-162. Asp-188 contacts Mg(2+).

It belongs to the HAD-like hydrolase superfamily. MasA/MtnC family. Monomer. Requires Mg(2+) as cofactor.

It is found in the cytoplasm. The protein localises to the nucleus. It catalyses the reaction 5-methylsulfanyl-2,3-dioxopentyl phosphate + H2O = 1,2-dihydroxy-5-(methylsulfanyl)pent-1-en-3-one + phosphate. It participates in amino-acid biosynthesis; L-methionine biosynthesis via salvage pathway; L-methionine from S-methyl-5-thio-alpha-D-ribose 1-phosphate: step 3/6. It functions in the pathway amino-acid biosynthesis; L-methionine biosynthesis via salvage pathway; L-methionine from S-methyl-5-thio-alpha-D-ribose 1-phosphate: step 4/6. Bifunctional enzyme that catalyzes the enolization of 2,3-diketo-5-methylthiopentyl-1-phosphate (DK-MTP-1-P) into the intermediate 2-hydroxy-3-keto-5-methylthiopentenyl-1-phosphate (HK-MTPenyl-1-P), which is then dephosphorylated to form the acireductone 1,2-dihydroxy-3-keto-5-methylthiopentene (DHK-MTPene). The protein is Enolase-phosphatase E1 of Sordaria macrospora (strain ATCC MYA-333 / DSM 997 / K(L3346) / K-hell).